The sequence spans 129 residues: Small ribosomal subunit protein uS11c (129 aa).

It belongs to the universal ribosomal protein uS11 family. As to quaternary structure, part of the 30S ribosomal subunit.

It is found in the plastid. Its subcellular location is the chloroplast. This chain is Small ribosomal subunit protein uS11c, found in Rhodomonas salina (Cryptomonas salina).